Here is a 71-residue protein sequence, read N- to C-terminus: Augerpeptide-s7a (71 aa).

The signal sequence occupies residues 1-20 (MSALKFVLICGLVLLLIETI). Residues 21-29 (PGVSLNLMR) constitute a propeptide that is removed on maturation. Disulfide bonds link Cys36–Cys48, Cys42–Cys65, and Cys47–Cys68.

In terms of tissue distribution, expressed by the venom duct.

The protein resides in the secreted. In terms of biological role, elicits an uncoordinated twisting syndrome when injected into C.elegans, but has no effect on mice. The protein is Augerpeptide-s7a of Terebra subulata (Chocolate spotted auger).